A 450-amino-acid polypeptide reads, in one-letter code: Methionine aminopeptidase 2-2 (450 aa).

Basic and acidic residues-rich tracts occupy residues 1–10 (MGAKISEDHP) and 30–39 (RGAHLSRDGD). The interval 1–100 (MGAKISEDHP…PPRVPLSELF (100 aa)) is disordered. The span at 47 to 56 (GDDDDDDDEG) shows a compositional bias: acidic residues. The span at 69–86 (KKKKKKRKPKKKKAKKAT) shows a compositional bias: basic residues. Histidine 211 provides a ligand contact to substrate. 3 residues coordinate a divalent metal cation: aspartate 232, aspartate 243, and histidine 302. Histidine 310 provides a ligand contact to substrate. A divalent metal cation is bound by residues glutamate 335 and glutamate 431.

The protein belongs to the peptidase M24A family. Methionine aminopeptidase eukaryotic type 2 subfamily. Requires Co(2+) as cofactor. It depends on Zn(2+) as a cofactor. Mn(2+) serves as cofactor. Fe(2+) is required as a cofactor.

It localises to the cytoplasm. It carries out the reaction Release of N-terminal amino acids, preferentially methionine, from peptides and arylamides.. Cotranslationally removes the N-terminal methionine from nascent proteins. The N-terminal methionine is often cleaved when the second residue in the primary sequence is small and uncharged (Met-Ala-, Cys, Gly, Pro, Ser, Thr, or Val). This Fusarium vanettenii (strain ATCC MYA-4622 / CBS 123669 / FGSC 9596 / NRRL 45880 / 77-13-4) (Fusarium solani subsp. pisi) protein is Methionine aminopeptidase 2-2.